The following is a 419-amino-acid chain: Serine hydroxymethyltransferase (419 aa).

(6S)-5,6,7,8-tetrahydrofolate-binding positions include Leu121 and 125 to 127 (GHL). N6-(pyridoxal phosphate)lysine is present on Lys230. A (6S)-5,6,7,8-tetrahydrofolate-binding site is contributed by 355 to 357 (SPF).

Belongs to the SHMT family. As to quaternary structure, homodimer. It depends on pyridoxal 5'-phosphate as a cofactor.

Its subcellular location is the cytoplasm. It carries out the reaction (6R)-5,10-methylene-5,6,7,8-tetrahydrofolate + glycine + H2O = (6S)-5,6,7,8-tetrahydrofolate + L-serine. Its pathway is one-carbon metabolism; tetrahydrofolate interconversion. It participates in amino-acid biosynthesis; glycine biosynthesis; glycine from L-serine: step 1/1. In terms of biological role, catalyzes the reversible interconversion of serine and glycine with tetrahydrofolate (THF) serving as the one-carbon carrier. This reaction serves as the major source of one-carbon groups required for the biosynthesis of purines, thymidylate, methionine, and other important biomolecules. Also exhibits THF-independent aldolase activity toward beta-hydroxyamino acids, producing glycine and aldehydes, via a retro-aldol mechanism. This Streptococcus equi subsp. zooepidemicus (strain H70) protein is Serine hydroxymethyltransferase.